Here is a 258-residue protein sequence, read N- to C-terminus: UPF0246 protein plu0566 (258 aa).

It belongs to the UPF0246 family.

In Photorhabdus laumondii subsp. laumondii (strain DSM 15139 / CIP 105565 / TT01) (Photorhabdus luminescens subsp. laumondii), this protein is UPF0246 protein plu0566.